The primary structure comprises 364 residues: DNA polymerase IV (364 aa).

In terms of domain architecture, UmuC spans 6–186 (IIHIDMDAFY…LPIESFWGVG (181 aa)). 2 residues coordinate Mg(2+): D10 and D104. E105 is an active-site residue.

Belongs to the DNA polymerase type-Y family. As to quaternary structure, monomer. Requires Mg(2+) as cofactor.

It is found in the cytoplasm. The enzyme catalyses DNA(n) + a 2'-deoxyribonucleoside 5'-triphosphate = DNA(n+1) + diphosphate. Functionally, poorly processive, error-prone DNA polymerase involved in untargeted mutagenesis. Copies undamaged DNA at stalled replication forks, which arise in vivo from mismatched or misaligned primer ends. These misaligned primers can be extended by PolIV. Exhibits no 3'-5' exonuclease (proofreading) activity. May be involved in translesional synthesis, in conjunction with the beta clamp from PolIII. The chain is DNA polymerase IV from Bacteroides fragilis (strain YCH46).